Reading from the N-terminus, the 127-residue chain is UPF0389 protein GA21628 (127 aa).

The helical transmembrane segment at Ile69–Tyr88 threads the bilayer.

Belongs to the UPF0389 family.

It is found in the membrane. This is UPF0389 protein GA21628 from Drosophila pseudoobscura pseudoobscura (Fruit fly).